Here is a 735-residue protein sequence, read N- to C-terminus: Phosphoribosylformylglycinamidine synthase subunit PurL (735 aa).

His49 is a catalytic residue. ATP contacts are provided by Tyr52 and Lys91. Glu93 serves as a coordination point for Mg(2+). Substrate contacts are provided by residues Ser94 to His97 and Arg116. The Proton acceptor role is filled by His95. Position 117 (Asp117) interacts with Mg(2+). Gln240 contributes to the substrate binding site. Asp268 is a binding site for Mg(2+). Position 312–314 (Glu312–Gln314) interacts with substrate. Asp493 and Gly530 together coordinate ATP. Residue Asn531 participates in Mg(2+) binding. Ser533 contacts substrate.

This sequence belongs to the FGAMS family. Monomer. Part of the FGAM synthase complex composed of 1 PurL, 1 PurQ and 2 PurS subunits.

It localises to the cytoplasm. The catalysed reaction is N(2)-formyl-N(1)-(5-phospho-beta-D-ribosyl)glycinamide + L-glutamine + ATP + H2O = 2-formamido-N(1)-(5-O-phospho-beta-D-ribosyl)acetamidine + L-glutamate + ADP + phosphate + H(+). The protein operates within purine metabolism; IMP biosynthesis via de novo pathway; 5-amino-1-(5-phospho-D-ribosyl)imidazole from N(2)-formyl-N(1)-(5-phospho-D-ribosyl)glycinamide: step 1/2. Functionally, part of the phosphoribosylformylglycinamidine synthase complex involved in the purines biosynthetic pathway. Catalyzes the ATP-dependent conversion of formylglycinamide ribonucleotide (FGAR) and glutamine to yield formylglycinamidine ribonucleotide (FGAM) and glutamate. The FGAM synthase complex is composed of three subunits. PurQ produces an ammonia molecule by converting glutamine to glutamate. PurL transfers the ammonia molecule to FGAR to form FGAM in an ATP-dependent manner. PurS interacts with PurQ and PurL and is thought to assist in the transfer of the ammonia molecule from PurQ to PurL. The polypeptide is Phosphoribosylformylglycinamidine synthase subunit PurL (Azorhizobium caulinodans (strain ATCC 43989 / DSM 5975 / JCM 20966 / LMG 6465 / NBRC 14845 / NCIMB 13405 / ORS 571)).